The sequence spans 238 residues: Neuromodulin (238 aa).

The segment at 1-238 (MLCCMRRTKQ…EEPEADQEHA (238 aa)) is disordered. S-palmitoyl cysteine attachment occurs at residues cysteine 3 and cysteine 4. The segment covering 9–32 (KQVEKNDEDQKIEQDGIKPEDKAH) has biased composition (basic and acidic residues). Positions 31–60 (AHKAATKIQASFRGHITRKKLKGEKKDDAQ) constitute an IQ domain. At serine 41 the chain carries Phosphoserine; by PHK and PKC. The segment covering 54 to 83 (EKKDDAQAAEAEANKKDEAPVADGVEKKGE) has biased composition (basic and acidic residues). The span at 84-95 (GTTATEAAPATG) shows a compositional bias: low complexity. Basic and acidic residues predominate over residues 97–116 (KPDEPGKAGETPSEEKKGEG). Low complexity predominate over residues 119 to 130 (ATEQAAPQAPAS). Polar residues predominate over residues 139-154 (ETESATKASTDNSPSS). A phosphoserine mark is found at serine 151, serine 153, and serine 154. The segment covering 155 to 167 (KAEDAPAKEEPKQ) has biased composition (basic and acidic residues). The segment covering 168–199 (ADVPAAVTAAAATTPAAEDAAAKATAQPPTET) has biased composition (low complexity). Threonine 181 is subject to Phosphothreonine. 2 positions are modified to phosphoserine; by CK2: serine 202 and serine 203. Over residues 213-225 (DETKPKESARQDE) the composition is skewed to basic and acidic residues. The span at 226–238 (GKEEEPEADQEHA) shows a compositional bias: acidic residues.

The protein belongs to the neuromodulin family. As to quaternary structure, identified in a complex containing FGFR4, NCAM1, CDH2, PLCG1, FRS2, SRC, SHC1, GAP43 and CTTN. Interacts (via IQ domain) with calmodulin. Binds calmodulin with a greater affinity in the absence of Ca(2+) than in its presence. Post-translationally, phosphorylated. Phosphorylation of this protein by a protein kinase C is specifically correlated with certain forms of synaptic plasticity. Palmitoylated by ZDHHC3. Palmitoylation is regulated by ARF6 and is essential for plasma membrane association and axonal and dendritic filopodia induction. Deacylated by LYPLA2.

It localises to the cell membrane. It is found in the cell projection. The protein resides in the growth cone membrane. The protein localises to the synapse. Its subcellular location is the filopodium membrane. It localises to the perikaryon. It is found in the dendrite. The protein resides in the axon. The protein localises to the cytoplasm. In terms of biological role, this protein is associated with nerve growth. It is a major component of the motile 'growth cones' that form the tips of elongating axons. Plays a role in axonal and dendritic filopodia induction. The polypeptide is Neuromodulin (GAP43) (Macaca fascicularis (Crab-eating macaque)).